Here is a 388-residue protein sequence, read N- to C-terminus: MIKNPKVLILTAHYGNGHVQVAKTLEQTFRQKGIEDVIVCDLFGESHPFITDITKYLYLKSYTIGKELYRLFYYGVEKIYDKKIASWYANFGRKRLKTLLQVEKPDIVINTFPIIAVPELKKQTGISIPVYNVLTDFCVHKIWIHREVDRYFVATDHVKELMVDIGVPAEQIVETGIPIRSSFELKVNPDIIYNKYQLCKNKKILLIVAGAHGVLGNVKELCQSFMSVPNLQVVVVCGKNEALKQDLLSLQNQNSDALKVFGYVENIDELFRVTSCMITKPGGITLSEAAALQVPVILYKPVPGQENENAMYFEKKGAAVVIRDDSEVFAKTEALLQDDVKLLQMKEAMKSIYLPEPAGHIVDAILAENHAEPRHIPIKSPALAQSFT.

The protein belongs to the glycosyltransferase 28 family. UgtP subfamily.

It localises to the cell membrane. The enzyme catalyses a 1,2-diacyl-3-O-(beta-D-glucopyranosyl)-sn-glycerol + UDP-alpha-D-glucose = a 1,2-diacyl-3-O-(beta-D-Glc-(1-&gt;6)-beta-D-Glc)-sn-glycerol + UDP + H(+). The catalysed reaction is a 1,2-diacyl-3-O-(beta-D-Glc-(1-&gt;6)-beta-D-Glc)-sn-glycerol + UDP-alpha-D-glucose = a 1,2-diacyl-3-O-(beta-D-Glc-(1-&gt;6)-beta-D-Glc-(1-&gt;6)-beta-D-Glc)-sn-glycerol + UDP + H(+). It catalyses the reaction a 1,2-diacyl-sn-glycerol + UDP-alpha-D-glucose = a 1,2-diacyl-3-O-(beta-D-glucopyranosyl)-sn-glycerol + UDP + H(+). Its pathway is glycolipid metabolism; diglucosyl-diacylglycerol biosynthesis. In terms of biological role, processive glucosyltransferase involved in the biosynthesis of both the bilayer- and non-bilayer-forming membrane glucolipids. Is able to successively transfer up to three glucosyl residues to diacylglycerol (DAG), thereby catalyzing the formation of beta-monoglucosyl-DAG (3-O-(beta-D-glucopyranosyl)-1,2-diacyl-sn-glycerol), beta-diglucosyl-DAG (3-O-(beta-D-glucopyranosyl-beta-(1-&gt;6)-D-glucopyranosyl)-1,2-diacyl-sn-glycerol) and beta-triglucosyl-DAG (3-O-(beta-D-glucopyranosyl-beta-(1-&gt;6)-D-glucopyranosyl-beta-(1-&gt;6)-D-glucopyranosyl)-1,2-diacyl-sn-glycerol). Beta-diglucosyl-DAG is the predominant glycolipid found in Bacillales and is also used as a membrane anchor for lipoteichoic acid (LTA). The protein is Processive diacylglycerol beta-glucosyltransferase of Bacillus cereus (strain G9842).